The primary structure comprises 91 residues: Insertion element IS1 7 protein InsA (91 aa).

Belongs to the IS1 elements InsA family.

Absolutely required for transposition of IS1. This is Insertion element IS1 7 protein InsA (insA7) from Escherichia coli (strain K12).